The following is a 144-amino-acid chain: Large ribosomal subunit protein uL11 (144 aa).

The protein belongs to the universal ribosomal protein uL11 family. Part of the ribosomal stalk of the 50S ribosomal subunit. Interacts with L10 and the large rRNA to form the base of the stalk. L10 forms an elongated spine to which L12 dimers bind in a sequential fashion forming a multimeric L10(L12)X complex. Post-translationally, one or more lysine residues are methylated.

Its function is as follows. Forms part of the ribosomal stalk which helps the ribosome interact with GTP-bound translation factors. This Streptomyces coelicolor (strain ATCC BAA-471 / A3(2) / M145) protein is Large ribosomal subunit protein uL11.